Here is an 835-residue protein sequence, read N- to C-terminus: MKRRTDPECTAPIKKQKKRVAELALSLSSTSDDEPPSSVSHGAKASTTSLSGSDSETEGKQHSSDSFDDAFKADSLVEGTSSRYSMYNSVSQKLMAKMGFREGEGLGKYSQGRKDIVEASSQKGRRGLGLTLRGFDQELNVDWRDEPEPSACEQVSWFPECTTEIPDTQEMSDWMVVGKRKMIIEDETEFCGEELLHSVLQCKSVFDVLDGEEMRRARTRANPYEMIRGVFFLNRAAMKMANMDFVFDRMFTNPRDSYGKPLVKDREAELLYFADVCAGPGGFSEYVLWRKKWHAKGFGMTLKGPNDFKLEDFYSASSELFEPYYGEGGIDGDGDITRPENISAFRNFVLDNTDRKGVHFLMADGGFSVEGQENLQEILSKQLLLCQFLMALSIVRTGGHFICKTFDLFTPFSVGLVYLLYCCFERVCLFKPITSRPANSERYVVCKGLKVGIDDVRDYLFAVNIKLNQLRNTDSDVNLVVPLEVIKGDHEFTDYMIRSNESHCSLQIKALAKIHAFVQDTTLSEPRQAEIRKECLRLWGIPDQARVAPSSSDPKSKFFELIQGTEIDIFSYKPTLLTSKTLEKIRPVFDYRCMVSGSEQKFLIGLGKSQIYTWDGRQSDRWIKLDLKTELPRDTLLSVEIVHELKGEGKAQRKISAIHILDVLVLNGTDVREQHFNQRIQLAEKFVKAVSKPSRPDMNPIRVKEVYRLEEMEKIFVRLEMKIIKGSSGTPKLSYTGRDDRHFVPMGLYIVRTVNEPWTMGFSKSFKKKFFYNKKTKDSTFDLPADSIAPFHICYYGRLFWEWGDGIRVHDSQKPQDQDKLSKEDVLSFIQMHRA.

Residues 1-67 (MKRRTDPECT…EGKQHSSDSF (67 aa)) are disordered. The short motif at 2 to 19 (KRRTDPECTAPIKKQKKR) is the Bipartite nuclear localization signal element. Ser28, Ser31, Ser53, Ser66, and Ser91 each carry phosphoserine. Over residues 37–54 (SSVSHGAKASTTSLSGSD) the composition is skewed to polar residues. The span at 57–67 (TEGKQHSSDSF) shows a compositional bias: basic and acidic residues. Residues 87–133 (YNSVSQKLMAKMGFREGEGLGKYSQGRKDIVEASSQKGRRGLGLTLR) form the G-patch domain. Lys108 carries the N6-acetyllysine modification. Residues 203–207 (KSVFD) and Arg218 contribute to the substrate site. The region spanning 231 to 450 (FFLNRAAMKM…ERYVVCKGLK (220 aa)) is the RrmJ-type SAM-dependent 2'-O-MTase domain. Residue Asn234 participates in S-adenosyl-L-methionine binding. Lys239 is a catalytic residue. S-adenosyl-L-methionine is bound by residues 277-283 (CAGPGGF) and 335-336 (DI). Asp364 is a catalytic residue. 374-376 (NLQ) contributes to the substrate binding site. Residue Lys404 is the Proton acceptor of the active site. Asn439 provides a ligand contact to substrate. Positions 727–835 (SSGTPKLSYT…VLSFIQMHRA (109 aa)) are interaction with POLR2A. The 35-residue stretch at 752–786 (RTVNEPWTMGFSKSFKKKFFYNKKTKDSTFDLPAD) folds into the WW domain.

Interacts with POLR2A (via C-terminus).

The protein resides in the nucleus. It catalyses the reaction a 5'-end (N(7)-methyl 5'-triphosphoguanosine)-ribonucleoside in mRNA + S-adenosyl-L-methionine = a 5'-end (N(7)-methyl 5'-triphosphoguanosine)-(2'-O-methyl-ribonucleoside) in mRNA + S-adenosyl-L-homocysteine + H(+). Its function is as follows. S-adenosyl-L-methionine-dependent methyltransferase that mediates mRNA cap1 2'-O-ribose methylation to the 5'-cap structure of mRNAs. Methylates the ribose of the first nucleotide of a m(7)GpppG-capped mRNA and small nuclear RNA (snRNA) to produce m(7)GpppRm (cap1). Displays a preference for cap0 transcripts. Cap1 modification is linked to higher levels of translation. May be involved in the interferon response pathway. The chain is Cap-specific mRNA (nucleoside-2'-O-)-methyltransferase 1 (CMTR1) from Homo sapiens (Human).